The sequence spans 79 residues: Serine protease inhibitor Kazal-type 1-like (79 aa).

A signal peptide spans 1 to 23 (MKVAIIFLLSALALLNLAGNTTA). One can recognise a Kazal-like domain in the interval 26–79 (IGKKANCPNTLVGCPRDYDPVCGTDGKTYANECILCFENRKFGTSIRIQRRGLC). 3 cysteine pairs are disulfide-bonded: C32-C61, C39-C58, and C47-C79.

In terms of tissue distribution, seminal vesicle.

The protein localises to the secreted. Functionally, serine protease inhibitor which exhibits anti-trypsin activity. In the pancreas, protects against trypsin-catalyzed premature activation of zymogens. In the male reproductive tract, binds to sperm heads where it modulates sperm capacitance by inhibiting calcium uptake and nitrogen oxide (NO) production. This is Serine protease inhibitor Kazal-type 1-like from Rattus norvegicus (Rat).